Reading from the N-terminus, the 482-residue chain is UDP-N-acetylmuramate--L-alanine ligase (482 aa).

ATP is bound at residue 129 to 135 (GTHGKTT).

It belongs to the MurCDEF family.

Its subcellular location is the cytoplasm. It carries out the reaction UDP-N-acetyl-alpha-D-muramate + L-alanine + ATP = UDP-N-acetyl-alpha-D-muramoyl-L-alanine + ADP + phosphate + H(+). The protein operates within cell wall biogenesis; peptidoglycan biosynthesis. In terms of biological role, cell wall formation. This Acinetobacter baumannii (strain AB307-0294) protein is UDP-N-acetylmuramate--L-alanine ligase.